The following is a 277-amino-acid chain: Energy-coupling factor transporter ATP-binding protein EcfA1 (277 aa).

One can recognise an ABC transporter domain in the interval 4–238 (IETQDLCHTY…PDLLSSVRLD (235 aa)). Residue 37-44 (GPNGAGKS) participates in ATP binding.

This sequence belongs to the ABC transporter superfamily. Energy-coupling factor EcfA family. In terms of assembly, forms a stable energy-coupling factor (ECF) transporter complex composed of 2 membrane-embedded substrate-binding proteins (S component), 2 ATP-binding proteins (A component) and 2 transmembrane proteins (T component).

It localises to the cell membrane. In terms of biological role, ATP-binding (A) component of a common energy-coupling factor (ECF) ABC-transporter complex. Unlike classic ABC transporters this ECF transporter provides the energy necessary to transport a number of different substrates. The sequence is that of Energy-coupling factor transporter ATP-binding protein EcfA1 from Methanospirillum hungatei JF-1 (strain ATCC 27890 / DSM 864 / NBRC 100397 / JF-1).